The sequence spans 439 residues: Proline--tRNA ligase (439 aa).

Belongs to the class-II aminoacyl-tRNA synthetase family. ProS type 2 subfamily. Homodimer.

The protein resides in the cytoplasm. It catalyses the reaction tRNA(Pro) + L-proline + ATP = L-prolyl-tRNA(Pro) + AMP + diphosphate. In terms of biological role, catalyzes the attachment of proline to tRNA(Pro) in a two-step reaction: proline is first activated by ATP to form Pro-AMP and then transferred to the acceptor end of tRNA(Pro). In Rhodopseudomonas palustris (strain BisB5), this protein is Proline--tRNA ligase.